Consider the following 334-residue polypeptide: ADP-L-glycero-D-manno-heptose-6-epimerase (334 aa).

Residues 11-12, 32-33, lysine 39, lysine 54, 77-81, and asparagine 94 contribute to the NADP(+) site; these read FI, DN, and QGACS. The Proton acceptor role is filled by tyrosine 141. Residue lysine 145 coordinates NADP(+). Asparagine 171 is a substrate binding site. 2 residues coordinate NADP(+): valine 172 and lysine 180. Lysine 180 acts as the Proton acceptor in catalysis. Substrate contacts are provided by residues arginine 182, histidine 189, 203-206, arginine 216, and tyrosine 295; that span reads FGSN.

It belongs to the NAD(P)-dependent epimerase/dehydratase family. HldD subfamily. As to quaternary structure, homopentamer. The cofactor is NADP(+).

The enzyme catalyses ADP-D-glycero-beta-D-manno-heptose = ADP-L-glycero-beta-D-manno-heptose. It functions in the pathway nucleotide-sugar biosynthesis; ADP-L-glycero-beta-D-manno-heptose biosynthesis; ADP-L-glycero-beta-D-manno-heptose from D-glycero-beta-D-manno-heptose 7-phosphate: step 4/4. It participates in bacterial outer membrane biogenesis; LOS core biosynthesis. In terms of biological role, catalyzes the interconversion between ADP-D-glycero-beta-D-manno-heptose and ADP-L-glycero-beta-D-manno-heptose via an epimerization at carbon 6 of the heptose. The polypeptide is ADP-L-glycero-D-manno-heptose-6-epimerase (Neisseria meningitidis serogroup B (strain ATCC BAA-335 / MC58)).